The chain runs to 392 residues: Formate-dependent phosphoribosylglycinamide formyltransferase (392 aa).

N(1)-(5-phospho-beta-D-ribosyl)glycinamide-binding positions include 22-23 (EL) and glutamate 82. ATP is bound by residues arginine 114, lysine 155, 160-165 (SSGKGQ), 195-198 (EGLV), and glutamate 203. The ATP-grasp domain maps to 119–308 (RLAAETLSLP…EFALHVRAFL (190 aa)). 2 residues coordinate Mg(2+): glutamate 267 and glutamate 279. N(1)-(5-phospho-beta-D-ribosyl)glycinamide is bound by residues aspartate 286, lysine 355, and 362–363 (RR).

It belongs to the PurK/PurT family. Homodimer.

The enzyme catalyses N(1)-(5-phospho-beta-D-ribosyl)glycinamide + formate + ATP = N(2)-formyl-N(1)-(5-phospho-beta-D-ribosyl)glycinamide + ADP + phosphate + H(+). It functions in the pathway purine metabolism; IMP biosynthesis via de novo pathway; N(2)-formyl-N(1)-(5-phospho-D-ribosyl)glycinamide from N(1)-(5-phospho-D-ribosyl)glycinamide (formate route): step 1/1. Its function is as follows. Involved in the de novo purine biosynthesis. Catalyzes the transfer of formate to 5-phospho-ribosyl-glycinamide (GAR), producing 5-phospho-ribosyl-N-formylglycinamide (FGAR). Formate is provided by PurU via hydrolysis of 10-formyl-tetrahydrofolate. The chain is Formate-dependent phosphoribosylglycinamide formyltransferase from Sodalis glossinidius (strain morsitans).